Consider the following 222-residue polypeptide: Thiopurine S-methyltransferase (222 aa).

S-adenosyl-L-methionine-binding residues include Trp10, Leu45, Glu66, and Arg126.

Belongs to the class I-like SAM-binding methyltransferase superfamily. TPMT family.

The protein localises to the cytoplasm. The enzyme catalyses S-adenosyl-L-methionine + a thiopurine = S-adenosyl-L-homocysteine + a thiopurine S-methylether.. The protein is Thiopurine S-methyltransferase of Shewanella piezotolerans (strain WP3 / JCM 13877).